The following is an 854-amino-acid chain: DNA mismatch repair protein MutS (854 aa).

An ATP-binding site is contributed by 614 to 621 (GPNMGGKS).

Belongs to the DNA mismatch repair MutS family.

Its function is as follows. This protein is involved in the repair of mismatches in DNA. It is possible that it carries out the mismatch recognition step. This protein has a weak ATPase activity. The protein is DNA mismatch repair protein MutS of Yersinia pestis bv. Antiqua (strain Antiqua).